Here is a 126-residue protein sequence, read N- to C-terminus: MSKVQEIIEAVKGLTVLELSELVKALEDEFGVSAAAPVAMAVAPGAAAPAEAPAEEQTEFDVILKEAGDKKINVIKVVREITALGLKEAKALVDEAPKPVKEKVSKEEAESIKAKLEEAGATVEIK.

Belongs to the bacterial ribosomal protein bL12 family. In terms of assembly, homodimer. Part of the ribosomal stalk of the 50S ribosomal subunit. Forms a multimeric L10(L12)X complex, where L10 forms an elongated spine to which 2 to 4 L12 dimers bind in a sequential fashion. Binds GTP-bound translation factors.

Functionally, forms part of the ribosomal stalk which helps the ribosome interact with GTP-bound translation factors. Is thus essential for accurate translation. The chain is Large ribosomal subunit protein bL12 from Moorella thermoacetica (strain ATCC 39073 / JCM 9320).